Consider the following 503-residue polypeptide: Cytochrome P450 3A12 (503 aa).

Cys442 lines the heme pocket.

It belongs to the cytochrome P450 family. It depends on heme as a cofactor.

The protein localises to the endoplasmic reticulum membrane. Its subcellular location is the microsome membrane. It carries out the reaction an organic molecule + reduced [NADPH--hemoprotein reductase] + O2 = an alcohol + oxidized [NADPH--hemoprotein reductase] + H2O + H(+). Functionally, cytochromes P450 are a group of heme-thiolate monooxygenases. In liver microsomes, this enzyme is involved in an NADPH-dependent electron transport pathway. It oxidizes a variety of structurally unrelated compounds, including steroids, fatty acids, and xenobiotics. The sequence is that of Cytochrome P450 3A12 (CYP3A12) from Canis lupus familiaris (Dog).